Reading from the N-terminus, the 941-residue chain is MutS protein homolog 1 (941 aa).

747–754 serves as a coordination point for ATP; the sequence is GPNMAGKS.

This sequence belongs to the DNA mismatch repair MutS family.

It is found in the cytoplasm. It localises to the mitochondrion. Its function is as follows. Involved in mitochondrial DNA repair. This Schizosaccharomyces pombe (strain 972 / ATCC 24843) (Fission yeast) protein is MutS protein homolog 1 (msh1).